Consider the following 261-residue polypeptide: Ribosome biogenesis protein NSA2 (261 aa).

The segment covering 1 to 40 (MPQNDYIERHIKQHGKRLDHEERKRKREARESHKISERAQ) has biased composition (basic and acidic residues). The segment at 1-43 (MPQNDYIERHIKQHGKRLDHEERKRKREARESHKISERAQKLT) is disordered. 2 consecutive short sequence motifs (nuclear localization signal) follow at residues 15–22 (GKRLDHEE) and 51–58 (AKKRYAEK). Positions 61-87 (MRKKIKAHEQSKVKGSSKPLDTDGDAL) are disordered.

This sequence belongs to the eukaryotic ribosomal protein eS8 family. Ribosome biogenesis protein NSA2 subfamily. In terms of assembly, component of the pre-66S ribosomal particle. Interacts with NOP7 and RRP1. Interacts with RSA4 (via WD repeats).

The protein localises to the nucleus. It localises to the nucleolus. In terms of biological role, involved in the biogenesis of the 60S ribosomal subunit. May play a part in the quality control of pre-60S particles. Under normal, rapid growth conditions, high levels of NSA2 would allow the progression of pre-60S particles through the ITS2 processing. This chain is Ribosome biogenesis protein NSA2 (NSA2), found in Saccharomyces cerevisiae (strain YJM789) (Baker's yeast).